A 235-amino-acid polypeptide reads, in one-letter code: Probable carboxylesterase Os04g0669600 (235 aa).

Residues S113, D167, and H199 each act as charge relay system in the active site.

It belongs to the AB hydrolase superfamily. AB hydrolase 2 family.

In terms of biological role, possesses carboxylesterase activity in vitro. This chain is Probable carboxylesterase Os04g0669600, found in Oryza sativa subsp. japonica (Rice).